We begin with the raw amino-acid sequence, 1163 residues long: Guanylate cyclase 32E (1163 aa).

The first 25 residues, 1 to 25 (MPGPCASAAAFSCILVLLLLGCQRS), serve as a signal peptide directing secretion. Topologically, residues 29–469 (AAGATVSSMR…LCPRKKLDWR (441 aa)) are extracellular. N-linked (GlcNAc...) asparagine glycans are attached at residues Asn147, Asn206, Asn368, and Asn390. A helical membrane pass occupies residues 470–490 (YLVSGPLCALVVVVAIALLIK). Over 491-1163 (HYRYEQTLAG…RSAPSITFRL (673 aa)) the chain is Cytoplasmic. The 294-residue stretch at 507 to 800 (MKDVTVINLG…IRLVRMHLKE (294 aa)) folds into the Protein kinase domain. The 131-residue stretch at 873–1003 (TILFSDIVGF…DTVNTASRME (131 aa)) folds into the Guanylate cyclase domain.

It belongs to the adenylyl cyclase class-4/guanylyl cyclase family.

The protein localises to the membrane. It catalyses the reaction GTP = 3',5'-cyclic GMP + diphosphate. In Drosophila melanogaster (Fruit fly), this protein is Guanylate cyclase 32E (Gyc32E).